A 384-amino-acid polypeptide reads, in one-letter code: MAP kinase-activated protein kinase 3 (384 aa).

Met1 is modified (N-acetylmethionine). A disordered region spans residues 1-22 (MDVETAEEQGGPAPPSGVPCGP). The Protein kinase domain maps to 46 to 306 (QLSKQVLGLG…ITQFMNHPWI (261 aa)). Residues 52-60 (LGLGVNGKV) and Lys75 contribute to the ATP site. Asp168 (proton acceptor) is an active-site residue. Position 203 is a phosphothreonine; by MAPK14 (Thr203). Residue Ser253 is modified to Phosphoserine; by MAPK14. At Ser309 the chain carries Phosphoserine; by autocatalysis. Residues 309–345 (SMVVPQTPLHTARVLQEDRDHWDEVKEEMTSALATMR) are autoinhibitory helix. Thr315 carries the post-translational modification Phosphothreonine; by MAPK14. The Nuclear export signal (NES) motif lies at 337–346 (MTSALATMRV). Residues 347-371 (DYDQVKIKDLKTSNNRLLNKRRKKQ) form a p38 MAPK-binding site region. 2 consecutive short sequence motifs (bipartite nuclear localization signal) follow at residues 352–355 (KIKD) and 366–370 (KRRKK). The segment at 359–384 (SNNRLLNKRRKKQAGSSSGSQGCNNQ) is disordered. The span at 373 to 384 (GSSSGSQGCNNQ) shows a compositional bias: low complexity.

Belongs to the protein kinase superfamily. CAMK Ser/Thr protein kinase family. Heterodimer with p38-alpha/MAPK14. The heterodimer with p38-alpha/MAPK14 forms a stable complex: molecules are positioned 'face to face' so that the ATP-binding sites of both kinases are at the heterodimer interface. Interacts with TCF3 and with polycomb proteins, such as PCH2 and BMI1/PCGF4. Phosphorylated and activated by MAPK1/ERK2 and MAPK3/ERK1. Phosphorylated and activated by MAP kinase p38-alpha/MAPK14 at Thr-203, Ser-253 and Thr-315.

Its subcellular location is the nucleus. It is found in the cytoplasm. The enzyme catalyses L-seryl-[protein] + ATP = O-phospho-L-seryl-[protein] + ADP + H(+). It catalyses the reaction L-threonyl-[protein] + ATP = O-phospho-L-threonyl-[protein] + ADP + H(+). With respect to regulation, activated following phosphorylation by p38-alpha/MAPK14 following various stresses. Inhibited by ligand 5B (2'-[2-(1,3-benzodioxol-5-yl)pyrimidin-4-yl]-5',6'-dihydrospiro[piperidine-4,7'-pyrrolo[3,2-c]pyridin]- 4'(1'h)-one) and ligand P4O (2-[2-(2-fluorophenyl)pyridin-4-yl]-1,5,6,7-tetrahydro- 4h-pyrrolo[3,2-c]pyridin-4-one), 2 ATP-competitive inhibitors. In terms of biological role, stress-activated serine/threonine-protein kinase involved in cytokines production, endocytosis, cell migration, chromatin remodeling and transcriptional regulation. Following stress, it is phosphorylated and activated by MAP kinase p38-alpha/MAPK14, leading to phosphorylation of substrates. Phosphorylates serine in the peptide sequence, Hyd-X-R-X(2)-S, where Hyd is a large hydrophobic residue. MAPKAPK2 and MAPKAPK3, share the same function and substrate specificity, but MAPKAPK3 kinase activity and level in protein expression are lower compared to MAPKAPK2. Phosphorylates HSP27/HSPB1, KRT18, KRT20, RCSD1, RPS6KA3, TAB3 and TTP/ZFP36. Mediates phosphorylation of HSP27/HSPB1 in response to stress, leading to dissociate HSP27/HSPB1 from large small heat-shock protein (sHsps) oligomers and impair their chaperone activities and ability to protect against oxidative stress effectively. Involved in inflammatory response by regulating tumor necrosis factor (TNF) and IL6 production post-transcriptionally: acts by phosphorylating AU-rich elements (AREs)-binding proteins, such as TTP/ZFP36, leading to regulate the stability and translation of TNF and IL6 mRNAs. Phosphorylation of TTP/ZFP36, a major post-transcriptional regulator of TNF, promotes its binding to 14-3-3 proteins and reduces its ARE mRNA affinity leading to inhibition of dependent degradation of ARE-containing transcript. Involved in toll-like receptor signaling pathway (TLR) in dendritic cells: required for acute TLR-induced macropinocytosis by phosphorylating and activating RPS6KA3. Also acts as a modulator of Polycomb-mediated repression. The polypeptide is MAP kinase-activated protein kinase 3 (MAPKAPK3) (Bos taurus (Bovine)).